The following is a 127-amino-acid chain: Fluoride-specific ion channel FluC (127 aa).

A run of 4 helical transmembrane segments spans residues 4-24, 35-55, 71-91, and 103-123; these read TLLAVFIGGGVGSVARWQLGV, LGTLLANLIGAFVIGGALAFF, TGLCGGLTTFSTFSAEVIMFL, and VLLNLAGSLLMTALAFALVTW. Gly-75 and Thr-78 together coordinate Na(+).

The protein belongs to the fluoride channel Fluc/FEX (TC 1.A.43) family.

The protein resides in the cell inner membrane. It catalyses the reaction fluoride(in) = fluoride(out). With respect to regulation, na(+) is not transported, but it plays an essential structural role and its presence is essential for fluoride channel function. Fluoride-specific ion channel. Important for reducing fluoride concentration in the cell, thus reducing its toxicity. The sequence is that of Fluoride-specific ion channel FluC from Pectobacterium carotovorum subsp. carotovorum (strain PC1).